A 300-amino-acid polypeptide reads, in one-letter code: Ribosomal protein L11 methyltransferase (300 aa).

Positions 152, 173, 195, and 234 each coordinate S-adenosyl-L-methionine.

The protein belongs to the methyltransferase superfamily. PrmA family.

It localises to the cytoplasm. It catalyses the reaction L-lysyl-[protein] + 3 S-adenosyl-L-methionine = N(6),N(6),N(6)-trimethyl-L-lysyl-[protein] + 3 S-adenosyl-L-homocysteine + 3 H(+). Methylates ribosomal protein L11. This Burkholderia pseudomallei (strain 1710b) protein is Ribosomal protein L11 methyltransferase.